The sequence spans 346 residues: Protein farnesyltransferase/geranylgeranyltransferase type-1 subunit alpha (346 aa).

PFTA repeat units follow at residues 59-93, 94-128, 130-164, 165-198, and 205-239; these read RSTRALQLTGEAIQLNPGNYTVWQFRRVVLEALGV, DLREELKFVDRIAGENTKNYQIWHHRRWLAEKLGA, AVTNELEFTKKIFSQDAKNYHAWSHRQWVLQALGG, WEDELAYCQQLLEDDIYNNSAWNQRYFVVTRSPL, and MRELEVNYTVQAIRASPENESPWRYLRGLYKNDTQ.

It belongs to the protein prenyltransferase subunit alpha family. In terms of assembly, heterodimer of an alpha and a beta subunit. Mg(2+) is required as a cofactor.

It carries out the reaction L-cysteinyl-[protein] + (2E,6E)-farnesyl diphosphate = S-(2E,6E)-farnesyl-L-cysteinyl-[protein] + diphosphate. It catalyses the reaction geranylgeranyl diphosphate + L-cysteinyl-[protein] = S-geranylgeranyl-L-cysteinyl-[protein] + diphosphate. Essential subunit of both the farnesyltransferase and the geranylgeranyltransferase complex. Contributes to the transfer of a farnesyl or geranylgeranyl moiety from farnesyl or geranylgeranyl diphosphate to a cysteine at the fourth position from the C-terminus of several proteins having the C-terminal sequence Cys-aliphatic-aliphatic-X. This Solanum lycopersicum (Tomato) protein is Protein farnesyltransferase/geranylgeranyltransferase type-1 subunit alpha (FTA).